Consider the following 319-residue polypeptide: 4-diphosphocytidyl-2-C-methyl-D-erythritol kinase (319 aa).

K21 is an active-site residue. 106 to 116 (PIGAGLAGGSS) is an ATP binding site. D148 is a catalytic residue.

This sequence belongs to the GHMP kinase family. IspE subfamily.

It carries out the reaction 4-CDP-2-C-methyl-D-erythritol + ATP = 4-CDP-2-C-methyl-D-erythritol 2-phosphate + ADP + H(+). It functions in the pathway isoprenoid biosynthesis; isopentenyl diphosphate biosynthesis via DXP pathway; isopentenyl diphosphate from 1-deoxy-D-xylulose 5-phosphate: step 3/6. Catalyzes the phosphorylation of the position 2 hydroxy group of 4-diphosphocytidyl-2C-methyl-D-erythritol. The protein is 4-diphosphocytidyl-2-C-methyl-D-erythritol kinase of Prochlorococcus marinus (strain MIT 9313).